Here is a 441-residue protein sequence, read N- to C-terminus: Ribosomal protein uS12 methylthiotransferase RimO (441 aa).

The 111-residue stretch at Pro-7–Pro-117 folds into the MTTase N-terminal domain. 6 residues coordinate [4Fe-4S] cluster: Cys-16, Cys-52, Cys-81, Cys-148, Cys-152, and Cys-155. A Radical SAM core domain is found at Leu-134–Arg-371. Residues Lys-374 to Gly-440 form the TRAM domain.

This sequence belongs to the methylthiotransferase family. RimO subfamily. Requires [4Fe-4S] cluster as cofactor.

Its subcellular location is the cytoplasm. The catalysed reaction is L-aspartate(89)-[ribosomal protein uS12]-hydrogen + (sulfur carrier)-SH + AH2 + 2 S-adenosyl-L-methionine = 3-methylsulfanyl-L-aspartate(89)-[ribosomal protein uS12]-hydrogen + (sulfur carrier)-H + 5'-deoxyadenosine + L-methionine + A + S-adenosyl-L-homocysteine + 2 H(+). In terms of biological role, catalyzes the methylthiolation of an aspartic acid residue of ribosomal protein uS12. The sequence is that of Ribosomal protein uS12 methylthiotransferase RimO from Rhodopseudomonas palustris (strain HaA2).